Reading from the N-terminus, the 156-residue chain is Small ribosomal subunit protein uS7 (156 aa).

The protein belongs to the universal ribosomal protein uS7 family. Part of the 30S ribosomal subunit. Contacts proteins S9 and S11.

In terms of biological role, one of the primary rRNA binding proteins, it binds directly to 16S rRNA where it nucleates assembly of the head domain of the 30S subunit. Is located at the subunit interface close to the decoding center, probably blocks exit of the E-site tRNA. This is Small ribosomal subunit protein uS7 from Paraburkholderia phymatum (strain DSM 17167 / CIP 108236 / LMG 21445 / STM815) (Burkholderia phymatum).